Reading from the N-terminus, the 307-residue chain is MATH domain and coiled-coil domain-containing protein At3g58380 (307 aa).

Residues 6–132 (DKKFVWVIKD…CREITIVIEV (127 aa)) enclose the MATH domain. A coiled-coil region spans residues 238 to 290 (KVDWLEKKLKEVKEKKKNVDNGKARLQQIEEDLQKLNQKRLDLKDILDKEKAN).

The chain is MATH domain and coiled-coil domain-containing protein At3g58380 from Arabidopsis thaliana (Mouse-ear cress).